The chain runs to 232 residues: uncharacterized protein (232 aa).

Residues 1–71 (MSNPTIEGDE…KENERIKNDD (71 aa)) are disordered. A compositionally biased stretch (acidic residues) spans 25-38 (DDLDDLDDILDDLD). Residues 44 to 71 (KNEEKKNIDEHKQTGNTSKENERIKNDD) show a composition bias toward basic and acidic residues.

This is an uncharacterized protein from Schizosaccharomyces pombe (strain 972 / ATCC 24843) (Fission yeast).